The chain runs to 587 residues: Prolycopene isomerase 1, chloroplastic (587 aa).

Low complexity predominate over residues 1–13 (MLCLSLNSSSTSP). The interval 1–21 (MLCLSLNSSSTSPPKSPLHHS) is disordered. Residues 1 to 50 (MLCLSLNSSSTSPPKSPLHHSFSRRSMRSWVCSPRVQRKKLGFWSSPKAV) constitute a chloroplast transit peptide.

This sequence belongs to the carotenoid/retinoid oxidoreductase family. CrtISO subfamily. NAD(+) is required as a cofactor. NADP(+) serves as cofactor. It depends on FAD as a cofactor. In terms of tissue distribution, up-regulated in the flower buds and flower lip tissue, while it is weakly expressed in leaves.

Its subcellular location is the plastid. The protein resides in the chloroplast membrane. It carries out the reaction 7,7',9,9'-tetra-cis-lycopene = all-trans-lycopene. It participates in carotenoid biosynthesis; lycopene biosynthesis. Functionally, carotene cis-trans-isomerase that converts 7,9,9'-tri-cis-neurosporene to 9'-cis-neurosporene and 7,9,9',7'-tetra-cis-lycopene (also known as prolycopene) into all-trans-lycopene. Isomerization requires redox-active components, suggesting that isomerization is achieved by a reversible redox reaction acting at specific double bonds. Isomerizes adjacent cis-double bonds at C7 and C9 pairwise into the trans-configuration, but is incapable of isomerizing single cis-double bonds at C9 and C9'. The sequence is that of Prolycopene isomerase 1, chloroplastic (CRTISO1) from Oncidium hybrid cultivar (Orchid).